Here is a 443-residue protein sequence, read N- to C-terminus: ATP-dependent protease ATPase subunit HslU (443 aa).

ATP is bound by residues Ile18, 60–65 (GVGKTE), Asp256, Glu321, and Arg393.

It belongs to the ClpX chaperone family. HslU subfamily. In terms of assembly, a double ring-shaped homohexamer of HslV is capped on each side by a ring-shaped HslU homohexamer. The assembly of the HslU/HslV complex is dependent on binding of ATP.

The protein localises to the cytoplasm. Its function is as follows. ATPase subunit of a proteasome-like degradation complex; this subunit has chaperone activity. The binding of ATP and its subsequent hydrolysis by HslU are essential for unfolding of protein substrates subsequently hydrolyzed by HslV. HslU recognizes the N-terminal part of its protein substrates and unfolds these before they are guided to HslV for hydrolysis. The chain is ATP-dependent protease ATPase subunit HslU from Edwardsiella ictaluri (strain 93-146).